A 218-amino-acid polypeptide reads, in one-letter code: Cytochrome b6 (218 aa).

Residues 35 to 55 (IFYCLGGITLVCFLIQFATGF) traverse the membrane as a helical segment. C38 serves as a coordination point for heme c. Heme b-binding residues include H89 and H103. The next 3 membrane-spanning stretches (helical) occupy residues 93 to 113 (ASMM…TGGF), 119 to 139 (LTWV…VTGY), and 189 to 209 (LHTF…FLMI). Heme b contacts are provided by H190 and H205.

It belongs to the cytochrome b family. PetB subfamily. In terms of assembly, the 4 large subunits of the cytochrome b6-f complex are cytochrome b6, subunit IV (17 kDa polypeptide, PetD), cytochrome f and the Rieske protein, while the 4 small subunits are PetG, PetL, PetM and PetN. The complex functions as a dimer. It depends on heme b as a cofactor. Heme c serves as cofactor.

It is found in the cellular thylakoid membrane. Its function is as follows. Component of the cytochrome b6-f complex, which mediates electron transfer between photosystem II (PSII) and photosystem I (PSI), cyclic electron flow around PSI, and state transitions. This Prochlorococcus marinus (strain MIT 9515) protein is Cytochrome b6.